The following is a 549-amino-acid chain: uncharacterized protein (549 aa).

A run of 12 helical transmembrane segments spans residues Met1 to Thr21, Ile28 to Leu48, Val50 to Gly70, Ile85 to Tyr105, Trp106 to Thr126, Phe165 to Phe185, Lys187 to Leu207, Ile222 to Ser242, Leu278 to Leu298, Asn310 to Val330, Ile361 to Ile381, and Val398 to Ile418.

This sequence belongs to the monovalent cation:proton antiporter 1 (CPA1) transporter (TC 2.A.36) family.

The protein resides in the cell inner membrane. This is an uncharacterized protein from Escherichia coli (strain K12).